The sequence spans 32 residues: Alcohol dehydrogenase-related 31 kDa protein (32 aa).

11 to 32 is an NAD(+) binding site; sequence YVADCGGIALETSXVLMTKNIA.

It belongs to the short-chain dehydrogenases/reductases (SDR) family.

This Drosophila yakuba (Fruit fly) protein is Alcohol dehydrogenase-related 31 kDa protein (Adhr).